Reading from the N-terminus, the 459-residue chain is Cysteine--tRNA ligase (459 aa).

Cys-28 contributes to the Zn(2+) binding site. The short motif at 30–40 (VTVYDLCHIGH) is the 'HIGH' region element. Zn(2+)-binding residues include Cys-209, His-234, and Glu-238. The 'KMSKS' region motif lies at 266–270 (KMSKS). Residue Lys-269 participates in ATP binding.

The protein belongs to the class-I aminoacyl-tRNA synthetase family. In terms of assembly, monomer. The cofactor is Zn(2+).

Its subcellular location is the cytoplasm. It catalyses the reaction tRNA(Cys) + L-cysteine + ATP = L-cysteinyl-tRNA(Cys) + AMP + diphosphate. The chain is Cysteine--tRNA ligase (cysS) from Haemophilus influenzae (strain ATCC 51907 / DSM 11121 / KW20 / Rd).